The sequence spans 269 residues: Aminoglycoside (3'') (9) adenylyltransferase (269 aa).

The enzyme catalyses streptomycin + ATP = 3''-O-adenylylstreptomycin + diphosphate. It carries out the reaction spectinomycin + ATP = 9-O-adenylylspectinomycin + diphosphate. In terms of biological role, mediates bacterial resistance to the antibiotic spectinomycin and probably also to streptomycin. The chain is Aminoglycoside (3'') (9) adenylyltransferase from Rhizobium radiobacter (Agrobacterium tumefaciens).